A 216-amino-acid polypeptide reads, in one-letter code: 3-isopropylmalate dehydratase small subunit (216 aa).

Belongs to the LeuD family. LeuD type 1 subfamily. As to quaternary structure, heterodimer of LeuC and LeuD.

The enzyme catalyses (2R,3S)-3-isopropylmalate = (2S)-2-isopropylmalate. It participates in amino-acid biosynthesis; L-leucine biosynthesis; L-leucine from 3-methyl-2-oxobutanoate: step 2/4. Functionally, catalyzes the isomerization between 2-isopropylmalate and 3-isopropylmalate, via the formation of 2-isopropylmaleate. The sequence is that of 3-isopropylmalate dehydratase small subunit from Burkholderia mallei (strain NCTC 10247).